A 445-amino-acid chain; its full sequence is Phosphoglucosamine mutase (445 aa).

Ser99 serves as the catalytic Phosphoserine intermediate. Ser99, Asp242, Asp244, and Asp246 together coordinate Mg(2+). Ser99 is subject to Phosphoserine.

This sequence belongs to the phosphohexose mutase family. It depends on Mg(2+) as a cofactor. Post-translationally, activated by phosphorylation.

It carries out the reaction alpha-D-glucosamine 1-phosphate = D-glucosamine 6-phosphate. Catalyzes the conversion of glucosamine-6-phosphate to glucosamine-1-phosphate. The polypeptide is Phosphoglucosamine mutase (Campylobacter jejuni subsp. jejuni serotype O:23/36 (strain 81-176)).